A 201-amino-acid chain; its full sequence is Histidine biosynthesis bifunctional protein HisIE (201 aa).

The phosphoribosyl-AMP cyclohydrolase stretch occupies residues 1-111 (MKINWQKVDN…EKTTQPDWIF (111 aa)). Residues 112-201 (LSKLERLIAS…IHKLKERHTK (90 aa)) form a phosphoribosyl-ATP pyrophosphohydrolase region.

It in the N-terminal section; belongs to the PRA-CH family. In the C-terminal section; belongs to the PRA-PH family.

Its subcellular location is the cytoplasm. The catalysed reaction is 1-(5-phospho-beta-D-ribosyl)-ATP + H2O = 1-(5-phospho-beta-D-ribosyl)-5'-AMP + diphosphate + H(+). The enzyme catalyses 1-(5-phospho-beta-D-ribosyl)-5'-AMP + H2O = 1-(5-phospho-beta-D-ribosyl)-5-[(5-phospho-beta-D-ribosylamino)methylideneamino]imidazole-4-carboxamide. Its pathway is amino-acid biosynthesis; L-histidine biosynthesis; L-histidine from 5-phospho-alpha-D-ribose 1-diphosphate: step 2/9. It participates in amino-acid biosynthesis; L-histidine biosynthesis; L-histidine from 5-phospho-alpha-D-ribose 1-diphosphate: step 3/9. The chain is Histidine biosynthesis bifunctional protein HisIE (hisI) from Pasteurella multocida (strain Pm70).